The following is a 598-amino-acid chain: (+)-bornyl diphosphate synthase, chloroplastic (598 aa).

The transit peptide at 1–54 (MSIISMNVSILSKPLNCLHNLERRPSKALLVPCTAPTARLRASCSSKLQEAHQI) directs the protein to the chloroplast. Residue arginine 314 participates in substrate binding. Mg(2+)-binding residues include aspartate 351 and aspartate 355. The short motif at 351–355 (DDIYD) is the DDXXD motif element. Arginine 493 is a binding site for substrate. Residues aspartate 496, threonine 500, and glutamate 504 each contribute to the Mg(2+) site. A substrate-binding site is contributed by threonine 500. Lysine 512 is a substrate binding site.

It belongs to the terpene synthase family. As to quaternary structure, homodimer. Mg(2+) is required as a cofactor.

Its subcellular location is the plastid. The protein resides in the chloroplast. It catalyses the reaction (2E)-geranyl diphosphate = (2S,4R)-bornyl diphosphate. It carries out the reaction (2E)-geranyl diphosphate = (1R,4S)-camphene + diphosphate. The enzyme catalyses (2E)-geranyl diphosphate = (1R,5R)-alpha-pinene + diphosphate. It participates in terpene metabolism; (R)-camphor biosynthesis. Catalyzes the formation of the (+)-camphor precursor (+)-bornyl diphosphate from geranyl diphosphate. The enzyme also produces significant amounts of (+)-alpha-pinene, (+)-camphene, and (+-)-limonene. In Salvia officinalis (Sage), this protein is (+)-bornyl diphosphate synthase, chloroplastic.